A 508-amino-acid polypeptide reads, in one-letter code: Mitochondrial distribution and morphology protein 10 (508 aa).

Residues proline 160–asparagine 195 are disordered.

It belongs to the MDM10 family. Component of the ER-mitochondria encounter structure (ERMES) or MDM complex, composed of MMM1, MDM10, MDM12 and MDM34. Associates with the mitochondrial outer membrane sorting assembly machinery SAM(core) complex.

It localises to the mitochondrion outer membrane. Its function is as follows. Component of the ERMES/MDM complex, which serves as a molecular tether to connect the endoplasmic reticulum and mitochondria. Components of this complex are involved in the control of mitochondrial shape and protein biogenesis and may function in phospholipid exchange. MDM10 is involved in the late assembly steps of the general translocase of the mitochondrial outer membrane (TOM complex). Functions in the TOM40-specific route of the assembly of outer membrane beta-barrel proteins, including the association of TOM40 with the receptor TOM22 and small TOM proteins. Can associate with the SAM(core) complex as well as the MDM12-MMM1 complex, both involved in late steps of the major beta-barrel assembly pathway, that is responsible for biogenesis of all outer membrane beta-barrel proteins. May act as a switch that shuttles between both complexes and channels precursor proteins into the TOM40-specific pathway. Plays a role in mitochondrial morphology and in the inheritance of mitochondria. This Cryptococcus neoformans var. neoformans serotype D (strain B-3501A) (Filobasidiella neoformans) protein is Mitochondrial distribution and morphology protein 10.